Reading from the N-terminus, the 295-residue chain is sn-glycerol-3-phosphate transport system permease protein UgpA (295 aa).

The Cytoplasmic portion of the chain corresponds to 1–11 (MSPSRPGFSCS). Residues 12 to 32 (WLPYLLVLPQLAITAIFFLWP) traverse the membrane as a helical segment. At 33–80 (AGEALWYSVQTLDPFGLSSEFVGLSNFIQLFQDEYYLASFYTTLIFSA) the chain is on the periplasmic side. The ABC transmembrane type-1 domain maps to 72–284 (FYTTLIFSAL…LLVIGLTVIQ (213 aa)). A helical membrane pass occupies residues 81–101 (LVAGIGLIVSLFLAAMVNYVL). Residues 102 to 109 (RGSRLYQT) lie on the Cytoplasmic side of the membrane. A helical membrane pass occupies residues 110-130 (LLILPYAVAPAVAAVLWIFLF). The Periplasmic portion of the chain corresponds to 131-157 (DPGLGLITHALAKLGYSWNHAQNSGQA). A helical membrane pass occupies residues 158–178 (MFLVVLASVWKQISYNFLFFL). Residues 179-207 (AALQSIPKSLVEAAAIDGAGPVRRFFNLV) lie on the Cytoplasmic side of the membrane. Residues 208 to 228 (LPLISPVSFFLLVVNLVYAFF) form a helical membrane-spanning segment. Over 229–262 (DTFPVIDAATGGGPVQATTTLIYKIYREGFAGLD) the chain is Periplasmic. A helical transmembrane segment spans residues 263–283 (LSSSAAQSVILMLLVIGLTVI). Residues 284–295 (QFRFVERKVRYQ) are Cytoplasmic-facing.

The protein belongs to the binding-protein-dependent transport system permease family. UgpAE subfamily. As to quaternary structure, the complex is composed of two ATP-binding proteins (UgpC), two transmembrane proteins (UgpA and UgpE) and a solute-binding protein (UgpB).

It localises to the cell inner membrane. In terms of biological role, part of the ABC transporter complex UgpBAEC involved in sn-glycerol-3-phosphate (G3P) import. Probably responsible for the translocation of the substrate across the membrane. The sequence is that of sn-glycerol-3-phosphate transport system permease protein UgpA (ugpA) from Yersinia pestis bv. Antiqua (strain Antiqua).